Reading from the N-terminus, the 250-residue chain is Acetoacetate decarboxylase 1 (250 aa).

The active-site Schiff-base intermediate with acetoacetate is the K120.

This sequence belongs to the ADC family.

The enzyme catalyses acetoacetate + H(+) = acetone + CO2. Functionally, catalyzes the conversion of acetoacetate to acetone and carbon dioxide. The protein is Acetoacetate decarboxylase 1 of Bradyrhizobium diazoefficiens (strain JCM 10833 / BCRC 13528 / IAM 13628 / NBRC 14792 / USDA 110).